A 255-amino-acid polypeptide reads, in one-letter code: BTB/POZ domain-containing protein kctd15 (255 aa).

Positions A30–E100 constitute a BTB domain.

Forms oligomers, predominantly homopentamers. Interacts with TFAP2A; this interaction inhibits TFAP2A transcriptional activation.

Its subcellular location is the nucleus. Its function is as follows. During embryonic development, interferes with neural crest formation. Inhibits AP2 transcriptional activity by interaction with its activation domain. The chain is BTB/POZ domain-containing protein kctd15 (kctd15) from Xenopus tropicalis (Western clawed frog).